The primary structure comprises 136 residues: Probable S-adenosyl-L-methionine-binding protein PH1056 (136 aa).

A TsaA-like domain is found at 8–126 (IVPVGYIRKE…FPERYDCPKE (119 aa)). Residues 48 to 49 (HK), R78, and 106 to 109 (EDGT) each bind S-adenosyl-L-methionine.

Belongs to the tRNA methyltransferase O family.

The sequence is that of Probable S-adenosyl-L-methionine-binding protein PH1056 from Pyrococcus horikoshii (strain ATCC 700860 / DSM 12428 / JCM 9974 / NBRC 100139 / OT-3).